The sequence spans 466 residues: 3-isopropylmalate dehydratase large subunit (466 aa).

Positions 347, 407, and 410 each coordinate [4Fe-4S] cluster.

It belongs to the aconitase/IPM isomerase family. LeuC type 1 subfamily. As to quaternary structure, heterodimer of LeuC and LeuD. It depends on [4Fe-4S] cluster as a cofactor.

It catalyses the reaction (2R,3S)-3-isopropylmalate = (2S)-2-isopropylmalate. Its pathway is amino-acid biosynthesis; L-leucine biosynthesis; L-leucine from 3-methyl-2-oxobutanoate: step 2/4. Functionally, catalyzes the isomerization between 2-isopropylmalate and 3-isopropylmalate, via the formation of 2-isopropylmaleate. The polypeptide is 3-isopropylmalate dehydratase large subunit (Acidiphilium cryptum (strain JF-5)).